Reading from the N-terminus, the 75-residue chain is MGSFSIWHWLIVLVIVLLVFGTKRLTSGAKDLGSAVKEFKKGMHDDDKPAGKLGDDSRSAEQAREAQAERDRDAR.

Residues Met1–Gly21 form a helical membrane-spanning segment. Residues Lys41 to Arg75 form a disordered region.

The protein belongs to the TatA/E family. The Tat system comprises two distinct complexes: a TatABC complex, containing multiple copies of TatA, TatB and TatC subunits, and a separate TatA complex, containing only TatA subunits. Substrates initially bind to the TatABC complex, which probably triggers association of the separate TatA complex to form the active translocon.

The protein resides in the cell inner membrane. Part of the twin-arginine translocation (Tat) system that transports large folded proteins containing a characteristic twin-arginine motif in their signal peptide across membranes. TatA could form the protein-conducting channel of the Tat system. This is Sec-independent protein translocase protein TatA from Xanthomonas campestris pv. campestris (strain 8004).